A 231-amino-acid polypeptide reads, in one-letter code: Uracil-DNA glycosylase (231 aa).

Asp-74 functions as the Proton acceptor in the catalytic mechanism.

Belongs to the uracil-DNA glycosylase (UDG) superfamily. UNG family.

It localises to the cytoplasm. It catalyses the reaction Hydrolyzes single-stranded DNA or mismatched double-stranded DNA and polynucleotides, releasing free uracil.. Its function is as follows. Excises uracil residues from the DNA which can arise as a result of misincorporation of dUMP residues by DNA polymerase or due to deamination of cytosine. The chain is Uracil-DNA glycosylase from Campylobacter jejuni (strain RM1221).